A 294-amino-acid polypeptide reads, in one-letter code: 33 kDa chaperonin (294 aa).

Cystine bridges form between C238-C240 and C271-C274.

It belongs to the HSP33 family. In terms of processing, under oxidizing conditions two disulfide bonds are formed involving the reactive cysteines. Under reducing conditions zinc is bound to the reactive cysteines and the protein is inactive.

It localises to the cytoplasm. Its function is as follows. Redox regulated molecular chaperone. Protects both thermally unfolding and oxidatively damaged proteins from irreversible aggregation. Plays an important role in the bacterial defense system toward oxidative stress. This chain is 33 kDa chaperonin, found in Staphylococcus haemolyticus (strain JCSC1435).